The primary structure comprises 461 residues: Phosphatidate cytidylyltransferase 1 (461 aa).

The tract at residues 1 to 68 (MLELRHRGGC…PEVPPSSDRT (68 aa)) is disordered. Arg-7 bears the Omega-N-methylarginine mark. Residues 22–56 (REGEAAGGDHETESTSDKETDIDDRYGDLDARGDS) are compositionally biased toward basic and acidic residues. 2 positions are modified to phosphoserine: Ser-35 and Ser-37. The next 6 membrane-spanning stretches (helical) occupy residues 96–116 (MISLFFLIIYMGSFMLMLLVL), 149–169 (FLLCVNYFFYGETVADYFATF), 183–203 (HRFISFALYLAGFCMFVLSLV), 230–250 (LVIQNLFEGMIWFLVPISSVI), 279–299 (GFIGGFFSTVIFGFIAAYVLS), and 357–377 (IALSTFASLIGPFGGFFASGF).

Belongs to the CDS family. In terms of assembly, homodimer. Interacts with FOS; this interaction may enhance catalytic activity. The cofactor is Mg(2+). As to expression, expressed in adult brain, eye, smooth muscle and testis. Highly expressed in the inner segment of the photoreceptor layer of adult retina.

It is found in the endoplasmic reticulum membrane. It catalyses the reaction a 1,2-diacyl-sn-glycero-3-phosphate + CTP + H(+) = a CDP-1,2-diacyl-sn-glycerol + diphosphate. The enzyme catalyses 1-octadecanoyl-2-(5Z,8Z,11Z,14Z-eicosatetraenoyl)-sn-glycero-3-phosphate + CTP + H(+) = 1-octadecanoyl-2-(5Z,8Z,11Z,14Z-eicosatetraenoyl)-sn-glycero-3-cytidine-5'-diphosphate + diphosphate. The catalysed reaction is 1-octadecanoyl-2-(9Z,12Z-octadecadienoyl)-sn-glycero-3-phosphate + CTP + H(+) = 1-octadecanoyl-2-(9Z,12Z-octadecadienoyl)-sn-glycero-3-cytidine-5'-diphosphate + diphosphate. It carries out the reaction 1-hexadecanoyl-2-(5Z,8Z,11Z,14Z-eicosatetraenoyl)-sn-glycero-3-phosphate + CTP + H(+) = 1-hexadecanoyl-2-(5Z,8Z,11Z,14Z-eicosatetraenoyl)-sn-glycero-3-cytidine-5'-diphosphate + diphosphate. It catalyses the reaction 1,2-di-(5Z,8Z,11Z,14Z)-eicosatetraenoyl-sn-glycero-3-phosphate + CTP + H(+) = 1,2-di-(5Z,8Z,11Z,14Z-eicosatetraenoyl)-sn-glycero-3-cytidine-5'-diphosphate + diphosphate. The enzyme catalyses 1-octadecanoyl-2-(9Z-octadecenoyl)-sn-glycero-3-phosphate + CTP + H(+) = 1-octadecanoyl-2-(9Z-octadecenoyl)-sn-glycero-3-cytidine-5'-diphosphate + diphosphate. The catalysed reaction is 1-octadecanoyl-2-(4Z,7Z,10Z,13Z,16Z,19Z-docosahexaenoyl)-sn-glycero-3-phosphate + CTP + H(+) = 1-octadecanoyl-2-(4Z,7Z,10Z,13Z,16Z,19Z-docosahexaenoyl)-sn-glycero-3-cytidine-5'-diphosphate + diphosphate. It carries out the reaction 1,2-di-(9Z,12Z-octadecadienoyl)-sn-glycero-3-phosphate + CTP + H(+) = 1,2-di-(9Z,12Z-octadecadienoyl)-sn-glycero-3-cytidine-5'-diphosphate + diphosphate. It catalyses the reaction 1,2-di-(9Z-octadecenoyl)-sn-glycero-3-phosphate + CTP + H(+) = 1,2-di-(9Z-octadecenoyl)-sn-glycero-3-cytidine-5'-diphosphate + diphosphate. It functions in the pathway phospholipid metabolism; CDP-diacylglycerol biosynthesis; CDP-diacylglycerol from sn-glycerol 3-phosphate: step 3/3. Catalyzes the conversion of phosphatidic acid (PA) to CDP-diacylglycerol (CDP-DAG), an essential intermediate in the synthesis of phosphatidylglycerol, cardiolipin and phosphatidylinositol. Exhibits almost no acyl chain preference for PA, showing no discrimination for the sn-1/sn-2 acyl chain composition of PAs. Plays an important role in regulating the growth of lipid droplets which are storage organelles at the center of lipid and energy homeostasis. Positively regulates the differentiation and development of adipocytes. The chain is Phosphatidate cytidylyltransferase 1 from Mus musculus (Mouse).